The primary structure comprises 334 residues: NmrA-like family domain-containing oxidoreductase lnaB (334 aa).

Residues 12 to 17, 38 to 42, 59 to 60, 80 to 82, Lys138, and 162 to 165 each bind NADP(+); these read GGTGKQ, RNAQS, DG, INS, and FLEN.

It belongs to the NmrA-type oxidoreductase family.

Its pathway is secondary metabolite biosynthesis. Functionally, nmrA-like family domain-containing oxidoreductase; part of the lna gene cluster that mediates the biosynthesis of diastereomeric piperazines. Lna and lnb clusters encode sets of enzymes that produce overlapping sets of previously undescribed metabolites such as piperazinomycin-like metabolites or morpholine. The lna and lnb biosynthetic pathways appear to be part of a signaling network that controls the formation of sclerotia, a resilient overwintering structure. One primary function of the non-canonical nonribosomal peptide synthetases lnaA and lnbA consists in the reduction of L-tyrosine. The presence in the clusters of tailoring enzymes such as the oxidoreductases lnaB, lnbB, lnaE or lnbE, as well as of the cytochrome P450 monooxygenases lnaC, lnaD, or lnbC, might explain formation of various diastereomeric piperazines. The sequence is that of NmrA-like family domain-containing oxidoreductase lnaB from Aspergillus flavus (strain ATCC 200026 / FGSC A1120 / IAM 13836 / NRRL 3357 / JCM 12722 / SRRC 167).